Here is a 374-residue protein sequence, read N- to C-terminus: Methylthioribose-1-phosphate isomerase (374 aa).

Residue Asp-251 is the Proton donor of the active site.

The protein belongs to the eIF-2B alpha/beta/delta subunits family. MtnA subfamily.

The protein resides in the cytoplasm. It localises to the nucleus. The enzyme catalyses 5-(methylsulfanyl)-alpha-D-ribose 1-phosphate = 5-(methylsulfanyl)-D-ribulose 1-phosphate. It participates in amino-acid biosynthesis; L-methionine biosynthesis via salvage pathway; L-methionine from S-methyl-5-thio-alpha-D-ribose 1-phosphate: step 1/6. Its function is as follows. Catalyzes the interconversion of methylthioribose-1-phosphate (MTR-1-P) into methylthioribulose-1-phosphate (MTRu-1-P). This chain is Methylthioribose-1-phosphate isomerase, found in Oryza sativa subsp. indica (Rice).